The sequence spans 249 residues: Nicotinamide/nicotinic acid mononucleotide adenylyltransferase (249 aa).

2 residues coordinate NAD(+): Ser-34 and Phe-35. ATP-binding residues include His-42 and Lys-75. NAD(+) is bound by residues Thr-112, Gly-141, Asp-143, Trp-154, Arg-173, and Asn-204. Residue Ser-209–Arg-210 participates in ATP binding.

The protein belongs to the eukaryotic NMN adenylyltransferase family. The cofactor is a divalent metal cation.

The catalysed reaction is beta-nicotinamide D-ribonucleotide + ATP + H(+) = diphosphate + NAD(+). It catalyses the reaction nicotinate beta-D-ribonucleotide + ATP + H(+) = deamido-NAD(+) + diphosphate. It functions in the pathway cofactor biosynthesis; NAD(+) biosynthesis; deamido-NAD(+) from nicotinate D-ribonucleotide: step 1/1. It participates in cofactor biosynthesis; NAD(+) biosynthesis; NAD(+) from nicotinamide D-ribonucleotide: step 1/1. Its function is as follows. Catalyzes the formation of NAD(+) from nicotinamide mononucleotide (NMN) and ATP. Can also use the deamidated form; nicotinic acid mononucleotide (NaMN) as substrate. In Oryza sativa subsp. japonica (Rice), this protein is Nicotinamide/nicotinic acid mononucleotide adenylyltransferase.